We begin with the raw amino-acid sequence, 95 residues long: MRTLALLAAILLVALQAQAEHISVSIDEVVDQQPPQAEDQDVAIYVKEHESSALEALGVKAGVVCACRRALCLPLERRAGFCRIRGRIHPLCCRR.

The N-terminal stretch at 1-19 is a signal peptide; sequence MRTLALLAAILLVALQAQA. Positions 20-62 are excised as a propeptide; it reads EHISVSIDEVVDQQPPQAEDQDVAIYVKEHESSALEALGVKAG. Disulfide bonds link Cys65/Cys93, Cys67/Cys82, and Cys72/Cys92.

Belongs to the alpha-defensin family.

The protein resides in the secreted. In terms of biological role, host-defense peptide that has antimicrobial activity. Inhibits corticotropin (ACTH)-stimulated corticosterone production (in vitro). The chain is Defensin alpha 4 from Oryctolagus cuniculus (Rabbit).